Consider the following 1700-residue polypeptide: MKLRNPKAPIRNDRKAQRSFHKMLSLKAQAKLALTIQDRLELGLLSNNFIRKKLQFVDGYCYLKFLRCAERKTAARNLGSDPSLGLMKRKLVPSQYHSWQSNYTLLVTKSSKLTFAHVNRALGGQKLAEVPANCCIGSTICPFLSVPGDHSSYLVNQLPYMNGYCYLKLIRRTCRFNAVVTLGPWPLATDFFDYIIHRNLNKDLGLFKCNLENTINGSFCHIVEADPGSQNCIFPLPQDCRIGGSISEVVKTLGPDKEMIERDAVTEIKKEIAIVRKYNPYHHSSKQQSALESYGIGSDPYAVRSHTHAAEKAIENKLLDIVGMNLRRRSVITMLWQKRNKAHLMGRSNCKDVYVNTIMEAKDLVRYDQFSFGLPSVATSTAFIGDALHHMTPESVFDLFERSPNLMVLHATIVIPPETLLKCRSSNPELYSLRYYDDKFVYIPEGHAGGSYVHEVKNSNWLAISHIQRGGKFLTVKRLETLAAHHYFVIVKGKVETDSIRVFQSPSQVELLDIFADRQSNVRCSLDHAFAIKMERYVHSLKRLELADVTAKTRQLLSSEELLQYSPTDLVKIDNYFYFLAHTSRFNSSEELIGSGFFESLVSPLKQWFSEICEKFLGKSNFHKTLEALEWKVINYDVKTVIYDMSKPWEKLHWKSENNLLSFDLDSNDNPTSLVDNTDCEASYSESTKFDYELVQVEDDFIDIRIPGIDIPIYDSEYLASEEPVEVEESPIPEVLPEIEDNLSDSMSIDGWMSQSLKTFLPEHDDKVLSILEKFGVSKYGQVVGKNLILPITDFKSVQFEKIGQDEFTESLQDRGFGFVSYTPDAERVAVAATDLEHGQGVLITSDEAGELFKKAMPMSVYTCVILGAGGAGKTTFVEKFVKDNPKSFTVVTPLSVLKKEWQRKGAKNVFTYETALKRSLKKPANEYVILDDFTRFPAGWIELYMSLNTKSKYIVIGDSRQADSHSMSGAFANALVPAIDLFAPLSPFYLNWTWRMTRPVANALGHVSWKLPESGKPILSVSSEVPKDCVVLAPSTTLKVGVETVNDKAFTYTSAQGATFDKVAILIDDNITRVCGDKAVYTALSRSKGEIVFVSTVTGPDTFEKVKCTPFLRTFVELVREYELNQPKVREPEEDFVDDVTPVTSQPKVSEEFLIEELNKNSVEKFDREIFRADLGHTDAVKEIGRVTEQIPRQQRSDEALNLVTLDKRVHHATVEENLDELARKKALGNILWTNFKEQYYSGLESVMVDQDLLVSCRAEITKTYLSKTEALLKGGQLRQSPDFDKFKIADFLKTQWVRKTEKYGLPIKAGQTVTSFMQETVMATGTLSRYMRRMFDKLCTNPNVYLHREKTEQDFSTWVKNGWNFSGHATINDCEAFDASQDGAFVEFERLHAEFLGVPRELIDFYVDTKIKSYIWRGTISVMRLSGEGPTYDFNTWANMAFMATKYSIPSVAMTAYSGDDFACDQVLSVKPAFKELECRFKLKEKRFLKSQGRGSYADFCGMIITPNGVIKNPRKLYLSLKSHDEIGTIDKAIVNYYNDLRTLISLGDNIFSALDATETEFFAGCLNVVHDYILRGSNYEGHQNLTLFKKPRTIKWRVERDETRDCLIHMIIQDRKFIRNLLEGVEQTCDNKPNSNLIFRGMTNGYQKRAKFNQLLNRQDEYLDKVLHKSAGQNALRRLTATLDDTQDSTVAEQSAV.

Residues 299–462 enclose the Alphavirus-like MT domain; it reads DPYAVRSHTH…VHEVKNSNWL (164 aa). Residues 842-991 form the (+)RNA virus helicase ATP-binding domain; sequence VLITSDEAGE…LFAPLSPFYL (150 aa). 868–875 provides a ligand contact to ATP; sequence GAGGAGKT. The 137-residue stretch at 992–1128 folds into the (+)RNA virus helicase C-terminal domain; sequence NWTWRMTRPV…LVREYELNQP (137 aa). Residues 1369 to 1480 form the RdRp catalytic domain; the sequence is GHATINDCEA…SVKPAFKELE (112 aa).

Belongs to the potexvirus/carlavirus RNA replication protein family.

The enzyme catalyses RNA(n) + a ribonucleoside 5'-triphosphate = RNA(n+1) + diphosphate. The catalysed reaction is ATP + H2O = ADP + phosphate + H(+). Its function is as follows. RNA replication. The protein possibly functions as an ATP-binding helicase. The chain is RNA replication protein from Sclerotinia sclerotiorum (White mold).